The primary structure comprises 604 residues: Protein TAX4 (604 aa).

Disordered stretches follow at residues histidine 38–isoleucine 77, phenylalanine 133–glutamate 249, glycine 267–leucine 300, aspartate 338–lysine 380, and proline 394–lysine 428. Over residues tyrosine 176–isoleucine 185 the composition is skewed to polar residues. Composition is skewed to low complexity over residues serine 186 to serine 203 and serine 224 to leucine 240. Basic residues-rich tracts occupy residues serine 276–leucine 290, lysine 366–leucine 379, and proline 396–serine 421. The EH domain maps to alanine 469–valine 559.

Belongs to the IRS4 family. In terms of assembly, interacts with INP51.

Functionally, with IRS4, acts as a positive regulator of INP51 activity and phosphatidylinositol 4,5-bisphosphate turnover. Negatively regulates signaling through the cell integrity pathway, including the MAP kinase SLT2. In Saccharomyces cerevisiae (strain YJM789) (Baker's yeast), this protein is Protein TAX4 (TAX4).